An 85-amino-acid polypeptide reads, in one-letter code: Kunitz-type serine protease inhibitor homolog beta-bungarotoxin B1 chain (85 aa).

An N-terminal signal peptide occupies residues 1 to 24 (MSSGGLLLLLGLLTLCAELTPVSS). A BPTI/Kunitz inhibitor domain is found at 31–81 (CDKPPDKGNCGSVRRAFYYDTRLKTCKAFPYRGCNGNGNHFKTETLCRCEC). Intrachain disulfides connect C31-C81, C40-C64, and C56-C77.

It belongs to the venom Kunitz-type family. As to quaternary structure, heterodimer; disulfide-linked. The A chain has phospholipase A2 activity and the B chain shows homology with the basic protease inhibitors. In terms of tissue distribution, expressed by the venom gland.

It localises to the secreted. Functionally, beta-bungarotoxin is a presynaptic neurotoxin of the venom. The B chain is homologous to venom basic protease inhibitors but has no protease inhibitor activity and is non-toxic. The chain is Kunitz-type serine protease inhibitor homolog beta-bungarotoxin B1 chain from Bungarus candidus (Malayan krait).